Consider the following 431-residue polypeptide: Ribonuclease TTHA0252 (431 aa).

Residues His-59, His-61, Asp-63, His-64, His-141, Asp-162, and His-400 each coordinate Zn(2+).

This sequence belongs to the metallo-beta-lactamase superfamily. RNA-metabolizing metallo-beta-lactamase-like family. Monomer. It depends on Zn(2+) as a cofactor.

It localises to the cytoplasm. With respect to regulation, inhibited by cadmium, cobalt, manganese, magnesium, calcium and nickel ions. Functionally, has endoribonuclease activity towards 23S and 16S rRNA (in vitro). In Thermus thermophilus (strain ATCC 27634 / DSM 579 / HB8), this protein is Ribonuclease TTHA0252.